We begin with the raw amino-acid sequence, 252 residues long: Cell division protein ZapD (252 aa).

This sequence belongs to the ZapD family. In terms of assembly, interacts with FtsZ.

It localises to the cytoplasm. Cell division factor that enhances FtsZ-ring assembly. Directly interacts with FtsZ and promotes bundling of FtsZ protofilaments, with a reduction in FtsZ GTPase activity. The polypeptide is Cell division protein ZapD (Cupriavidus metallidurans (strain ATCC 43123 / DSM 2839 / NBRC 102507 / CH34) (Ralstonia metallidurans)).